The primary structure comprises 259 residues: Probable metal transport system ATP-binding protein TC_0339 (259 aa).

An ABC transporter domain is found at 9-241; sequence WAVDDLCVNY…AIFQAYGCEL (233 aa). ATP is bound at residue 41–48; it reads GPNGAGKS.

This sequence belongs to the ABC transporter superfamily.

Its subcellular location is the cell inner membrane. In terms of biological role, part of an ATP-driven transport system TC_0338/TC_0339/TC_0341/TC_0342 for a metal. Probably responsible for energy coupling to the transport system. The sequence is that of Probable metal transport system ATP-binding protein TC_0339 from Chlamydia muridarum (strain MoPn / Nigg).